The chain runs to 444 residues: Adenylosuccinate synthetase (444 aa).

GTP contacts are provided by residues 12–18 and 40–42; these read GDEGKGK and GHT. Catalysis depends on Asp-13, which acts as the Proton acceptor. Positions 13 and 40 each coordinate Mg(2+). IMP contacts are provided by residues 13-16, 38-41, Thr-128, Arg-142, Gln-223, Thr-238, and Arg-302; these read DEGK and NAGH. His-41 (proton donor) is an active-site residue. A substrate-binding site is contributed by 298–304; sequence TTTGRRR. GTP-binding positions include Arg-304, 330-332, and 412-414; these read KLD and SLG.

It belongs to the adenylosuccinate synthetase family. Homodimer. It depends on Mg(2+) as a cofactor.

It localises to the cytoplasm. The catalysed reaction is IMP + L-aspartate + GTP = N(6)-(1,2-dicarboxyethyl)-AMP + GDP + phosphate + 2 H(+). The protein operates within purine metabolism; AMP biosynthesis via de novo pathway; AMP from IMP: step 1/2. Plays an important role in the de novo pathway of purine nucleotide biosynthesis. Catalyzes the first committed step in the biosynthesis of AMP from IMP. The chain is Adenylosuccinate synthetase from Synechococcus elongatus (strain ATCC 33912 / PCC 7942 / FACHB-805) (Anacystis nidulans R2).